Consider the following 306-residue polypeptide: Ornithine carbamoyltransferase (306 aa).

Residues 51-54 (STRT), Q78, R102, and 129-132 (HPCQ) contribute to the carbamoyl phosphate site. Residues N160, D223, and 227 to 228 (SM) each bind L-ornithine. Carbamoyl phosphate contacts are provided by residues 263 to 264 (CL) and R291.

The protein belongs to the aspartate/ornithine carbamoyltransferase superfamily. OTCase family.

Its subcellular location is the cytoplasm. It carries out the reaction carbamoyl phosphate + L-ornithine = L-citrulline + phosphate + H(+). The protein operates within amino-acid biosynthesis; L-arginine biosynthesis; L-arginine from L-ornithine and carbamoyl phosphate: step 1/3. Its function is as follows. Reversibly catalyzes the transfer of the carbamoyl group from carbamoyl phosphate (CP) to the N(epsilon) atom of ornithine (ORN) to produce L-citrulline. The protein is Ornithine carbamoyltransferase of Nostoc sp. (strain PCC 7120 / SAG 25.82 / UTEX 2576).